Here is a 382-residue protein sequence, read N- to C-terminus: Beta-lactamase CMY-1 (382 aa).

The signal sequence occupies residues 1-23 (MQQRQSILWGAVATLMWAGLAHA). Residue Ser88 is the Acyl-ester intermediate of the active site. A beta-lactam is bound by residues Ser88, Gln144, Tyr174, Asn176, and Asn363.

This sequence belongs to the class-C beta-lactamase family.

The catalysed reaction is a beta-lactam + H2O = a substituted beta-amino acid. Its activity is regulated as follows. Inhibited by the beta-lactamase-blocking agent sulbactam. In terms of biological role, class C beta-lactamase which confers resistance to penicillins and cephalosporins. Has benzylpenicillin- and cefalotin-hydrolyzing activities. Has weak cefuroxime, cefotaxime, cefoxitin, imipenem and oxacillin-hydrolyzing activities. The chain is Beta-lactamase CMY-1 from Klebsiella pneumoniae.